The sequence spans 289 residues: HTH-type transcriptional regulator CatR (289 aa).

The region spanning 1–57 (MELRHLRYFKVLAETLNFTRAAELLHIAQPPLSRQISQLEDQLGTLLVVRERPLRLT) is the HTH lysR-type domain. Residues 18 to 37 (FTRAAELLHIAQPPLSRQIS) constitute a DNA-binding region (H-T-H motif).

It belongs to the LysR transcriptional regulatory family.

It is found in the cytoplasm. In terms of biological role, positive regulator of the catBC operon that degrades catechol to acetyl-CoA. CatR binds in trans to the catR-catBC promoter-control region in the presence or absence of inducer but only activates the catBC operon in the presence of the inducer, cis-cis-muconate. This is HTH-type transcriptional regulator CatR (catR) from Pseudomonas putida (Arthrobacter siderocapsulatus).